The primary structure comprises 251 residues: MSICDPALRNALRTLKLSGMLDTLDARLAQTRNGDLGHLEFLQALREDEIARRESAALTRRLRRAKFEAQATFEDFDFTANPKLPGAMLRDLAALRWLDAGESVILHGPVGVGKTHVAQALVHAVARRGGDVRFAKTSRMLSDLAGGHADRSWGQRIREYTKPLVLILDDFAMREHTAMHADDLYELISDRAITGKPLILTSNRAPNNWYGLFPNPVVAESLLDRLINTSHQILMDGPSYRPRKRPGRTTS.

108-115 is a binding site for ATP; the sequence is GPVGVGKT.

It belongs to the IS21/IS1162 putative ATP-binding protein family.

The sequence is that of Putative ATP-binding protein Rv3427c in insertion sequence from Mycobacterium tuberculosis (strain ATCC 25618 / H37Rv).